A 1171-amino-acid chain; its full sequence is APC-related protein 1 (1171 aa).

The tract at residues 1-54 (MSSSSSDENETTIHSSSNPGSSGIYSQLKAGSSKRPSVRHDVSDAEDDEEPYEG) is disordered. Positions 1–481 (MSSSSSDENE…LSLRATRASP (481 aa)) are required for interaction with bar-1 and hmp-2. A compositionally biased stretch (low complexity) spans 15-26 (SSSNPGSSGIYS). The stretch at 312–356 (NCLKVLANILSPDARFTTLVDSASGILKYVSQYLATNSSHLELRS) is one ARM repeat. Disordered stretches follow at residues 587–617 (PVDDDLDIPTSTVMGTRSNSERSLGSMNPGS), 662–699 (HPEDNQMTTPPNHPSTQNTTHYSSGSANTMTRSDGTTV), 720–741 (RKTSEDLESPDDILPGPSLEVE), 767–822 (EEMP…EMTT), 837–936 (PRSR…TMRI), and 995–1030 (SSGSGSSLQKAETTAGSRDSGALATSTPIGSVSSLP). The interval 591–1171 (DLDIPTSTVM…NPKQMLVTIV (581 aa)) is required for interaction with pry-1. Composition is skewed to polar residues over residues 595–617 (PTSTVMGTRSNSERSLGSMNPGS) and 666–697 (NQMTTPPNHPSTQNTTHYSSGSANTMTRSDGT). Polar residues predominate over residues 788–799 (FSPSQKTTSSPA). Positions 857 to 874 (EPDRSSHSKNEEADRRDA) are enriched in basic and acidic residues. Composition is skewed to polar residues over residues 890-913 (RGSSPQQQQLHRMESLESQASSED) and 1002-1028 (LQKAETTAGSRDSGALATSTPIGSVSS).

It belongs to the adenomatous polyposis coli (APC) family. In terms of assembly, interacts (via N-terminus) with bar-1 and hmp-2; the interaction with hmp-2 is relatively weak. Interacts (via C-terminus) with pry-1 (via N-terminus). Probably associates with bar-1, gsk-3, pry-1 in a complex.

Its subcellular location is the cell junction. It is found in the adherens junction. The protein localises to the cytoplasm. The protein resides in the nucleus. Functionally, has a role in endoderm cell specification and pharyngeal development. Required for the migration of epithelial cells, organization of the anterior seam cells and ceh-13 expression during embryo morphogenesis. Prevents hyperactivation of the Wnt signaling pathway during endoderm development, probably by preventing hmp-2 nuclear translocation. During larval development, apr-1 is required for expression of lin-39 in P3-8.p. Shown to negatively regulate Wnt signaling in vulval precursor cells. Has a role in cell division by establishing the polarity of the mother cell which forms the asymmetries of the daughter nuclei. Thought to regulate export of wrm-1 from the nucleus possibly as part of a complex involving pry-1. This chain is APC-related protein 1, found in Caenorhabditis briggsae.